The chain runs to 316 residues: Ecto-ADP-ribosyltransferase 5 (316 aa).

An N-terminal signal peptide occupies residues 1-23; that stretch reads MIQATLLISLSCLSFYTLGSGVR. Cys50 and Cys266 are oxidised to a cystine. Asn68 carries N-linked (GlcNAc...) asparagine glycosylation. Residues 70–261 form the TR mART core domain; sequence TRLRESWETA…MTLSSSDQMC (192 aa). Tyr107 provides a ligand contact to NAD(+). Asn109 carries N-linked (GlcNAc...) asparagine glycosylation. NAD(+) is bound by residues Arg168 and Gln188. Arg168 is an active-site residue. Residue Ser191 is part of the active site. NAD(+) is bound at residue Ser222. Glu229 is an active-site residue. N-linked (GlcNAc...) asparagine glycans are attached at residues Asn242 and Asn248.

Belongs to the Arg-specific ADP-ribosyltransferase family.

Its subcellular location is the secreted. The protein localises to the membrane. It catalyses the reaction L-arginyl-[protein] + NAD(+) = N(omega)-(ADP-D-ribosyl)-L-arginyl-[protein] + nicotinamide + H(+). This chain is Ecto-ADP-ribosyltransferase 5 (ART5), found in Bos taurus (Bovine).